The sequence spans 396 residues: L-lactate dehydrogenase (396 aa).

Residues 1 to 380 (MIISAASDYR…TQDSLVQGLG (380 aa)) form the FMN hydroxy acid dehydrogenase domain. Substrate is bound at residue Tyr-24. Residues Ser-106 and Gln-127 each contribute to the FMN site. Tyr-129 contacts substrate. Thr-155 contributes to the FMN binding site. Residue Arg-164 coordinates substrate. Lys-251 is an FMN binding site. His-275 acts as the Proton acceptor in catalysis. A substrate-binding site is contributed by Arg-278. 306-330 (DSGIRNGLDVVRMIALGADTVLLGR) contributes to the FMN binding site.

It belongs to the FMN-dependent alpha-hydroxy acid dehydrogenase family. Requires FMN as cofactor.

The protein localises to the cell inner membrane. It carries out the reaction (S)-lactate + A = pyruvate + AH2. Catalyzes the conversion of L-lactate to pyruvate. Is coupled to the respiratory chain. This is L-lactate dehydrogenase from Escherichia coli O127:H6 (strain E2348/69 / EPEC).